The chain runs to 27 residues: Truncated HBeAg protein (27 aa).

This chain is Truncated HBeAg protein (C), found in Hepatitis B virus genotype C subtype ayw (isolate Australia/AustRC/1992) (HBV-C).